The primary structure comprises 491 residues: MATFKDACYHYKRLNKLNSLVLKLGANDEWRPAPMTKYKGWCLDCCQYTNLTYCRGCALYHVCQWCSQYNRCFLDEEPHLLRMRTFKDVVTKEDIEGLLTMYETLFPINEKLVNKFINSVKQRKCRNEYLLEWYNHLLMPITLQALTINLEDNVYYIFGYYDCMEHENQTPFQFINLLEKYDKLLLDDRNFHRMSHLPVILQQEYALRYFSKSRFLSKGKKRLSRSDFSDNLMEDRHSPTSLMQVVRNCISIHINDCEWNKACTLIVDARNYISIMNSSYTEHYSVSQRCKLFTKYKFGIVSRLVKPNYIFSSHESCALNVHNCKWCQINNHYKVWEDFRLRKIYNNVMDFIRALMKSNGNVGHCSSQESVYKYIPDLFLICKTEKWNEAVEMLFNYLEPVDINGTEYVLLDYEVNWEVRGLVMQNMDGKVPRILNMNDTKKILSAMIFDWFDTRYMRETPMTTSTTNQLRTLNKRNELIDEYDLELSDVE.

The RNA-binding stretch occupies residues Met1–Leu81. The interval Cys42 to His79 is zinc-binding domain. Residues Arg82–Asn176 form an important for cytoskeleton localization region. The segment at Asn320–Glu491 is interaction with host IRF3. The pLxIS motif signature appears at Leu485–Ser488.

It belongs to the rotavirus NSP1 family. In terms of assembly, interacts (via C-terminus) with host IRF3; this interaction leads to IRF3 degradation. Interacts with host IRF7; this interaction leads to IRF7 degradation. Interacts with host CUL1 and CUL3.

Its subcellular location is the host cytoplasm. It localises to the host cytoskeleton. Functionally, plays a role in the inhibition of host innate immunity by inducing the degradation of key host factors required to activate interferon production such as IRF3, IRF5 or IRF7. Associates with components of cullin RING ligases (CRLs) including CUL1 or CUL3, which are essential multisubunit ubiquitination complexes, to modulate their activities. This Bos taurus (Bovine) protein is Non-structural protein 1.